The sequence spans 294 residues: 4-hydroxy-tetrahydrodipicolinate synthase (294 aa).

T47 is a binding site for pyruvate. The active-site Proton donor/acceptor is Y135. K163 acts as the Schiff-base intermediate with substrate in catalysis. Residue T205 coordinates pyruvate.

This sequence belongs to the DapA family. As to quaternary structure, homotetramer; dimer of dimers.

The protein localises to the cytoplasm. It catalyses the reaction L-aspartate 4-semialdehyde + pyruvate = (2S,4S)-4-hydroxy-2,3,4,5-tetrahydrodipicolinate + H2O + H(+). It functions in the pathway amino-acid biosynthesis; L-lysine biosynthesis via DAP pathway; (S)-tetrahydrodipicolinate from L-aspartate: step 3/4. Functionally, catalyzes the condensation of (S)-aspartate-beta-semialdehyde [(S)-ASA] and pyruvate to 4-hydroxy-tetrahydrodipicolinate (HTPA). In Rickettsia akari (strain Hartford), this protein is 4-hydroxy-tetrahydrodipicolinate synthase.